A 424-amino-acid polypeptide reads, in one-letter code: Serine--tRNA ligase (424 aa).

231–233 (TAE) lines the L-serine pocket. Residue 262-264 (RAE) coordinates ATP. Glutamate 285 contributes to the L-serine binding site. 349-352 (EISS) serves as a coordination point for ATP. Serine 385 contacts L-serine.

It belongs to the class-II aminoacyl-tRNA synthetase family. Type-1 seryl-tRNA synthetase subfamily. As to quaternary structure, homodimer. The tRNA molecule binds across the dimer.

It is found in the cytoplasm. The catalysed reaction is tRNA(Ser) + L-serine + ATP = L-seryl-tRNA(Ser) + AMP + diphosphate + H(+). It carries out the reaction tRNA(Sec) + L-serine + ATP = L-seryl-tRNA(Sec) + AMP + diphosphate + H(+). Its pathway is aminoacyl-tRNA biosynthesis; selenocysteinyl-tRNA(Sec) biosynthesis; L-seryl-tRNA(Sec) from L-serine and tRNA(Sec): step 1/1. Catalyzes the attachment of serine to tRNA(Ser). Is also able to aminoacylate tRNA(Sec) with serine, to form the misacylated tRNA L-seryl-tRNA(Sec), which will be further converted into selenocysteinyl-tRNA(Sec). The chain is Serine--tRNA ligase from Geobacillus kaustophilus (strain HTA426).